Here is a 311-residue protein sequence, read N- to C-terminus: Probable manganese-dependent inorganic pyrophosphatase (311 aa).

Mn(2+) is bound by residues histidine 9, aspartate 13, aspartate 15, aspartate 77, histidine 99, and aspartate 151.

It belongs to the PPase class C family. The cofactor is Mn(2+).

It localises to the cytoplasm. It carries out the reaction diphosphate + H2O = 2 phosphate + H(+). This is Probable manganese-dependent inorganic pyrophosphatase from Streptococcus pyogenes serotype M49 (strain NZ131).